A 249-amino-acid chain; its full sequence is MKKTVIASTLAVGLGVTGIAAGNSADASEQGVDKAQLAQQAQSNPESLNAAPIQDGAYNINFNYNNTDYSFQSDGENFSWSYGEGSGEGSNASSEQATDNSSQQTAEQPQQVEQPQQTEQASTEQPAQEAAPQTEATQQPQQEATTQSASSSNESSSNESSSSEASESSSSGVNAHLQQIAQRESGGDIHATNPSSGASGKFQFLQSTWDSVAPAEYQGQPAASAPESVQDAAAQKLYDTEGASQWVTA.

The N-terminal stretch at 1 to 27 (MKKTVIASTLAVGLGVTGIAAGNSADA) is a signal peptide. Low complexity-rich tracts occupy residues 80–95 (WSYG…ASSE) and 103–171 (QQTA…SSSS). Residues 80-203 (WSYGEGSGEG…PSSGASGKFQ (124 aa)) form a disordered region. Polar residues-rich tracts occupy residues 172-182 (GVNAHLQQIAQ) and 192-203 (TNPSSGASGKFQ).

It belongs to the transglycosylase family. SceD subfamily.

It is found in the secreted. Is able to cleave peptidoglycan and affects clumping and separation of bacterial cells. The chain is Probable transglycosylase SceD 2 (sceD2) from Staphylococcus saprophyticus subsp. saprophyticus (strain ATCC 15305 / DSM 20229 / NCIMB 8711 / NCTC 7292 / S-41).